The sequence spans 430 residues: Divergent protein kinase domain 2A (430 aa).

The first 35 residues, 1–35 (MWRLVPPKLGRLSRSLKLAALGSLLVLMVLHSPSL), serve as a signal peptide directing secretion.

Belongs to the DIPK family.

It localises to the cytoplasmic vesicle. It is found in the COPI-coated vesicle. The protein resides in the golgi apparatus. The protein localises to the secreted. May play a role in cardiomyocyte proliferation through paracrine signaling and activation of the PPI3K-AKT-CDK7 signaling cascade. The protein is Divergent protein kinase domain 2A of Homo sapiens (Human).